Reading from the N-terminus, the 240-residue chain is MRQLSTTALVLFLFFYCSISTAWSLPYFAYRKRIPEPLLNKPRSRHARSIEDLDGLKEWLSNQQPLRGAVMAPPSEDNKRTVTVKGGANNEPTISDVLPKTRGINIYASLTRQFETVERRLKDQTQNVTVLAPRNSAIQDLPHKPWENPDDYEKFGEMNAYEGDKGQDRAKRNLERFVSAHVVAQSPWREGEEAETLGGDKLTWRKDGDRIYIEPERIRVESIAEQVSNGEVWVIDGVIN.

The signal sequence occupies residues 1 to 24; the sequence is MRQLSTTALVLFLFFYCSISTAWS. One can recognise an FAS1 domain in the interval 91 to 239; it reads EPTISDVLPK…GEVWVIDGVI (149 aa).

The protein resides in the vacuole. This chain is FAS1 domain-containing protein AN1527, found in Emericella nidulans (strain FGSC A4 / ATCC 38163 / CBS 112.46 / NRRL 194 / M139) (Aspergillus nidulans).